The chain runs to 196 residues: SPRY domain-containing protein 7 (196 aa).

A B30.2/SPRY domain is found at 1–184 (MAASVFCCLR…FSEFYHTPPP (184 aa)).

The polypeptide is SPRY domain-containing protein 7 (SPRYD7) (Gallus gallus (Chicken)).